A 211-amino-acid polypeptide reads, in one-letter code: Bcl-2 homologous antagonist/killer (211 aa).

The disordered stretch occupies residues 1-28 (MASGQGPGPPRQECGEPALPSASEEQVA). The residue at position 2 (Ala-2) is an N-acetylalanine. A BH3 motif is present at residues 74–88 (VGRQLAIIGDDINRR). Residues 117 to 136 (SLFESGINWGRVVALLGFGY) carry the BH1 motif. Residues Asp-160 and His-164 each contribute to the Zn(2+) site. The short motif at 169–184 (RWIAQRGGWVAALNLG) is the BH2 element. A helical membrane pass occupies residues 188–205 (ILNVLVVLGVVLLGQFVV).

The protein belongs to the Bcl-2 family. As to quaternary structure, homodimer. Formation of the homodimer is zinc-dependent. Forms heterodimers with BCL2 and BCL2L1 isoform Bcl-X(L). Forms heterooligomers with BAX. Interacts with BCL2A1. Interacts with RTL10/BOP. Interacts with VDAC1. Interacts with GIMAP3/IAN4 and GIMAP5/IAN5. (Microbial infection) Interacts with vaccinia virus protein F1. In terms of assembly, (Microbial infection) Interacts with myxoma virus protein M11L. As to quaternary structure, (Microbial infection) Interacts with Epstein-Barr virus protein BALF1. (Microbial infection) Interacts with adenovirus protein E1B 19K. Expressed in a wide variety of tissues, with highest levels in the heart and skeletal muscle.

It localises to the mitochondrion outer membrane. Functionally, plays a role in the mitochondrial apoptotic process. Upon arrival of cell death signals, promotes mitochondrial outer membrane (MOM) permeabilization by oligomerizing to form pores within the MOM. This releases apoptogenic factors into the cytosol, including cytochrome c, promoting the activation of caspase 9 which in turn processes and activates the effector caspases. The protein is Bcl-2 homologous antagonist/killer (BAK1) of Homo sapiens (Human).